The chain runs to 347 residues: GMP reductase (347 aa).

108–131 (ADFEKTKQILDLNPALNFVCIDVA) is a binding site for NADP(+). Gly181 and Gly183 together coordinate K(+). The active-site Thioimidate intermediate is Cys186. 216–239 (IVSDGGCTTPGDVAKAFGGGADFV) contributes to the NADP(+) binding site.

The protein belongs to the IMPDH/GMPR family. GuaC type 1 subfamily. Homotetramer.

It carries out the reaction IMP + NH4(+) + NADP(+) = GMP + NADPH + 2 H(+). Its function is as follows. Catalyzes the irreversible NADPH-dependent deamination of GMP to IMP. It functions in the conversion of nucleobase, nucleoside and nucleotide derivatives of G to A nucleotides, and in maintaining the intracellular balance of A and G nucleotides. This is GMP reductase from Shigella flexneri serotype 5b (strain 8401).